Reading from the N-terminus, the 1397-residue chain is Centlein (1397 aa).

Disordered stretches follow at residues 1 to 43 (MAAR…GLAG) and 56 to 76 (LWRG…GAAV). N-acetylalanine is present on alanine 2. Phosphoserine occurs at positions 5, 9, and 22. 2 coiled-coil regions span residues 95-126 (EEAK…KEFV) and 405-481 (VVNL…KLMA). Disordered regions lie at residues 422-449 (LKEK…SGKA) and 485-521 (CDQD…SEEL). Residues 485–503 (CDQDFSEKGTEGKHKEPPV) show a composition bias toward basic and acidic residues. Coiled-coil stretches lie at residues 674-778 (KNEK…KALR), 973-1114 (ISLR…MELL), and 1152-1299 (SESN…LKKM). Serine 1219 carries the phosphoserine modification. At threonine 1334 the chain carries Phosphothreonine.

In terms of assembly, interacts with CEP250 and CEP68. Interacts with NEK2; the interaction leads to phosphorylation of CNTLN. In terms of processing, phosphorylated directly or indirectly by NEK2.

The protein localises to the cytoplasm. Its subcellular location is the cytoskeleton. The protein resides in the microtubule organizing center. It is found in the centrosome. It localises to the centriole. In terms of biological role, required for centrosome cohesion and recruitment of CEP68 to centrosomes. The polypeptide is Centlein (Mus musculus (Mouse)).